Here is a 681-residue protein sequence, read N- to C-terminus: Phosphomethylpyrimidine synthase (681 aa).

Residues 1–13 (MSNNTTSLPAENS) show a composition bias toward polar residues. The disordered stretch occupies residues 1–29 (MSNNTTSLPAENSSHPRKGTPIRKKQREE). Over residues 15-25 (HPRKGTPIRKK) the composition is skewed to basic residues. Residues asparagine 254, methionine 283, tyrosine 312, histidine 348, 368–370 (SRG), 409–412 (DGLR), and glutamate 448 contribute to the substrate site. Histidine 452 lines the Zn(2+) pocket. Residue tyrosine 475 coordinates substrate. Zn(2+) is bound at residue histidine 516. Positions 596, 599, and 604 each coordinate [4Fe-4S] cluster. Over residues 658 to 667 (FRSRGSELYH) the composition is skewed to basic and acidic residues. The segment at 658-681 (FRSRGSELYHRPANLSAEANNEPT) is disordered.

This sequence belongs to the ThiC family. As to quaternary structure, homodimer. The cofactor is [4Fe-4S] cluster.

The enzyme catalyses 5-amino-1-(5-phospho-beta-D-ribosyl)imidazole + S-adenosyl-L-methionine = 4-amino-2-methyl-5-(phosphooxymethyl)pyrimidine + CO + 5'-deoxyadenosine + formate + L-methionine + 3 H(+). It functions in the pathway cofactor biosynthesis; thiamine diphosphate biosynthesis. Catalyzes the synthesis of the hydroxymethylpyrimidine phosphate (HMP-P) moiety of thiamine from aminoimidazole ribotide (AIR) in a radical S-adenosyl-L-methionine (SAM)-dependent reaction. This is Phosphomethylpyrimidine synthase from Yersinia pseudotuberculosis serotype I (strain IP32953).